A 270-amino-acid chain; its full sequence is MMKIGVSTLFFWEYPMVEIFDIFRDIGIKCMEFFPENPDFWDNRFDLDYIADLRKEFLKFDVALHNPHIELNPSSLNPYVREAVIKETLWSIELAKFYRCKLITIHPGKRPTNRSPTDEEYEAFFKYLDRTLEVAINKNITICVENMPERINRIGWSPEEMEWILKRYDELLYMTLDFAHAKEYMEEFLESVIDYIKHTHISGVVNRKDHFPLRKSEIDFSPYIKALLDYGYNGMFNLELDDRRLEKNPVTKEEKIEEVIKDIEFLESII.

This is an uncharacterized protein from Methanocaldococcus jannaschii (strain ATCC 43067 / DSM 2661 / JAL-1 / JCM 10045 / NBRC 100440) (Methanococcus jannaschii).